The following is a 131-amino-acid chain: Small ribosomal subunit protein uS8 (131 aa).

Belongs to the universal ribosomal protein uS8 family. Part of the 30S ribosomal subunit. Contacts proteins S5 and S12.

In terms of biological role, one of the primary rRNA binding proteins, it binds directly to 16S rRNA central domain where it helps coordinate assembly of the platform of the 30S subunit. In Polaromonas sp. (strain JS666 / ATCC BAA-500), this protein is Small ribosomal subunit protein uS8.